Reading from the N-terminus, the 312-residue chain is L-lactate dehydrogenase (312 aa).

The NAD(+) site is built by Val14, Asp35, and Tyr66. Residues Gln83, Arg90, and 122–125 (NPVD) each bind substrate. NAD(+) is bound by residues 120–122 (ASN) and Ser145. 150-153 (DSAR) is a binding site for substrate. His177 acts as the Proton acceptor in catalysis. A Phosphotyrosine modification is found at Tyr220. Substrate is bound at residue Thr229.

The protein belongs to the LDH/MDH superfamily. LDH family. As to quaternary structure, homotetramer.

Its subcellular location is the cytoplasm. The enzyme catalyses (S)-lactate + NAD(+) = pyruvate + NADH + H(+). It participates in fermentation; pyruvate fermentation to lactate; (S)-lactate from pyruvate: step 1/1. Functionally, catalyzes the conversion of lactate to pyruvate. The protein is L-lactate dehydrogenase of Mycoplasma pneumoniae (strain ATCC 29342 / M129 / Subtype 1) (Mycoplasmoides pneumoniae).